We begin with the raw amino-acid sequence, 291 residues long: Ribosomal RNA small subunit methyltransferase A (291 aa).

S-adenosyl-L-methionine-binding residues include N27, L29, G54, E75, D100, and N125.

This sequence belongs to the class I-like SAM-binding methyltransferase superfamily. rRNA adenine N(6)-methyltransferase family. RsmA subfamily.

It is found in the cytoplasm. The catalysed reaction is adenosine(1518)/adenosine(1519) in 16S rRNA + 4 S-adenosyl-L-methionine = N(6)-dimethyladenosine(1518)/N(6)-dimethyladenosine(1519) in 16S rRNA + 4 S-adenosyl-L-homocysteine + 4 H(+). Functionally, specifically dimethylates two adjacent adenosines (A1518 and A1519) in the loop of a conserved hairpin near the 3'-end of 16S rRNA in the 30S particle. May play a critical role in biogenesis of 30S subunits. This chain is Ribosomal RNA small subunit methyltransferase A, found in Streptococcus mutans serotype c (strain ATCC 700610 / UA159).